The primary structure comprises 255 residues: Indole-3-glycerol phosphate synthase (255 aa).

It belongs to the TrpC family.

It catalyses the reaction 1-(2-carboxyphenylamino)-1-deoxy-D-ribulose 5-phosphate + H(+) = (1S,2R)-1-C-(indol-3-yl)glycerol 3-phosphate + CO2 + H2O. Its pathway is amino-acid biosynthesis; L-tryptophan biosynthesis; L-tryptophan from chorismate: step 4/5. This is Indole-3-glycerol phosphate synthase from Streptococcus thermophilus (strain ATCC BAA-491 / LMD-9).